The primary structure comprises 156 residues: Small ribosomal subunit protein uS7 (156 aa).

This sequence belongs to the universal ribosomal protein uS7 family. In terms of assembly, part of the 30S ribosomal subunit. Contacts proteins S9 and S11.

One of the primary rRNA binding proteins, it binds directly to 16S rRNA where it nucleates assembly of the head domain of the 30S subunit. Is located at the subunit interface close to the decoding center, probably blocks exit of the E-site tRNA. This chain is Small ribosomal subunit protein uS7, found in Rippkaea orientalis (strain PCC 8801 / RF-1) (Cyanothece sp. (strain PCC 8801)).